Consider the following 86-residue polypeptide: Acyl carrier protein (86 aa).

In terms of domain architecture, Carrier spans 10 to 85 (DKIEQKVIEM…DVIKYIKERQ (76 aa)). Residue serine 45 is modified to O-(pantetheine 4'-phosphoryl)serine.

It belongs to the acyl carrier protein (ACP) family. Post-translationally, 4'-phosphopantetheine is transferred from CoA to a specific serine of apo-ACP by AcpS. This modification is essential for activity because fatty acids are bound in thioester linkage to the sulfhydryl of the prosthetic group.

The protein localises to the cytoplasm. It participates in lipid metabolism; fatty acid biosynthesis. In terms of biological role, carrier of the growing fatty acid chain in fatty acid biosynthesis. In Rickettsia prowazekii (strain Madrid E), this protein is Acyl carrier protein.